The chain runs to 463 residues: Probable ECA polymerase (463 aa).

Transmembrane regions (helical) follow at residues 6-26, 39-59, 65-85, 112-132, 154-174, 180-200, 201-221, 222-242, 340-360, 377-397, and 408-428; these read FGGL…LTWM, FSLL…VLVF, VVPV…YAIY, ANLT…IFFL, GVAL…VYFL, AWLM…VIVG, GTRA…IVRG, WITL…MFWL, LVVM…GLVI, YKAA…IVLT, and VVFF…LYWL.

It belongs to the WzyE family. Probably part of a complex composed of WzxE, WzyE and WzzE.

The protein resides in the cell inner membrane. It functions in the pathway bacterial outer membrane biogenesis; enterobacterial common antigen biosynthesis. Functionally, probably involved in the polymerization of enterobacterial common antigen (ECA) trisaccharide repeat units. In Pectobacterium carotovorum subsp. carotovorum (strain PC1), this protein is Probable ECA polymerase.